The sequence spans 78 residues: Small ribosomal subunit protein bS16c (78 aa).

This sequence belongs to the bacterial ribosomal protein bS16 family.

It localises to the plastid. The protein resides in the chloroplast. The chain is Small ribosomal subunit protein bS16c from Panax ginseng (Korean ginseng).